Here is a 450-residue protein sequence, read N- to C-terminus: MSSAPATNYKVADISLAAFGRKDIELSENEMPGLMYIRKKYGPSQPLKGARIAGCLHMTIQTAVLIETLVALGAEVTWSSCNIFSTQDHAAAAIAAAGVPVFAWKGETEEEYQWCIEQQLFAFKDGKKLNLILDDGGDLTSLVHEKYPEMLEDCYGLSEETTTGVHHLYKSLRDGKLKVPAINVNDSVTKSKFDNLYGCRESLVDGIKRATDVMIAGKVAIVAGFGDVGKGCAMALHGMGARVIVTEIDPINALQAAVSGYQVAPMDEVASIGQIFVTTTGCRDIITGKHFEQMPEDAIVCNIGHFDIEIDVAWLKANAESVVNIKPQVDRYLMKNGRHVILLADGRLVNLGCATGHSSFVMSCSFSNQVLAQIALFNADNKEFREKFPEFAKTGPFDVGVHLLPKVLDETVARCHLDHLGAKLTTLTETQAEYLGIPEEGPYKADIYRY.

Substrate contacts are provided by T59, D135, and E160. Residue 161-163 (TTT) participates in NAD(+) binding. Substrate is bound by residues K190 and D194. NAD(+) contacts are provided by residues N195, 224–229 (GFGDVG), E247, 303–305 (IGH), and N350.

The protein belongs to the adenosylhomocysteinase family. It depends on NAD(+) as a cofactor.

Its subcellular location is the cytoplasm. The catalysed reaction is S-adenosyl-L-homocysteine + H2O = L-homocysteine + adenosine. The protein operates within amino-acid biosynthesis; L-homocysteine biosynthesis; L-homocysteine from S-adenosyl-L-homocysteine: step 1/1. Its function is as follows. Adenosylhomocysteine is a competitive inhibitor of S-adenosyl-L-methionine-dependent methyl transferase reactions; therefore adenosylhomocysteinase may play a key role in the control of methylations via regulation of the intracellular concentration of adenosylhomocysteine. The chain is Adenosylhomocysteinase (SAH1) from Candida albicans (strain SC5314 / ATCC MYA-2876) (Yeast).